The following is a 360-amino-acid chain: Iron uptake protein A1 (360 aa).

The first 28 residues, 1-28 (MVQKLSRRLFLSIGTAFTVVVGSQLLSS), serve as a signal peptide directing secretion. Cys29 is lipidated: N-palmitoyl cysteine. The S-diacylglycerol cysteine moiety is linked to residue Cys29. His54, Tyr55, Tyr185, Tyr241, and Tyr242 together coordinate Fe cation.

Belongs to the bacterial solute-binding protein 1 family.

It is found in the cellular thylakoid membrane. Its subcellular location is the cell membrane. In terms of biological role, plays an important role in protecting the acceptor side of photosystem II (PSII) against oxidative damage, especially under iron-limiting growth conditions. The differing subcellular locations of futA1 (predominantly thylakoid lumen) and futA2 (predominantly periplasmic) suggest they may fulfill different roles. A major iron-binding protein involved in Fe(3+) uptake, probably part of a periplasmic ABC transporter complex futA1A2BC (TC 3.A.1.10.2) involved in Fe(3+) ion import (ferric iron). This protein and futA2 (slr0531) may be subunit proteins that have redundant or overlapping substrate-binding functions. The sequence is that of Iron uptake protein A1 (futA1) from Synechocystis sp. (strain ATCC 27184 / PCC 6803 / Kazusa).